A 132-amino-acid chain; its full sequence is Small ribosomal subunit protein uS8 (132 aa).

This sequence belongs to the universal ribosomal protein uS8 family. As to quaternary structure, part of the 30S ribosomal subunit. Contacts proteins S5 and S12.

In terms of biological role, one of the primary rRNA binding proteins, it binds directly to 16S rRNA central domain where it helps coordinate assembly of the platform of the 30S subunit. The polypeptide is Small ribosomal subunit protein uS8 (Stenotrophomonas maltophilia (strain R551-3)).